Consider the following 356-residue polypeptide: TPR repeat-containing protein P27G11.02 (356 aa).

The N-terminal 20 residues, 1 to 20 (MRMQWIWKSRRSLQNVFIRR), are a transit peptide targeting the mitochondrion. 2 TPR repeats span residues 194–227 (SRLF…TMAN) and 290–323 (AAAF…RKDD).

The protein localises to the mitochondrion. In Schizosaccharomyces pombe (strain 972 / ATCC 24843) (Fission yeast), this protein is TPR repeat-containing protein P27G11.02.